The primary structure comprises 156 residues: S-ribosylhomocysteine lyase (156 aa).

Fe cation is bound by residues H56, H60, and C123.

It belongs to the LuxS family. In terms of assembly, homodimer. The cofactor is Fe cation.

It catalyses the reaction S-(5-deoxy-D-ribos-5-yl)-L-homocysteine = (S)-4,5-dihydroxypentane-2,3-dione + L-homocysteine. In terms of biological role, involved in the synthesis of autoinducer 2 (AI-2) which is secreted by bacteria and is used to communicate both the cell density and the metabolic potential of the environment. The regulation of gene expression in response to changes in cell density is called quorum sensing. Catalyzes the transformation of S-ribosylhomocysteine (RHC) to homocysteine (HC) and 4,5-dihydroxy-2,3-pentadione (DPD). The protein is S-ribosylhomocysteine lyase of Staphylococcus saprophyticus subsp. saprophyticus (strain ATCC 15305 / DSM 20229 / NCIMB 8711 / NCTC 7292 / S-41).